The chain runs to 363 residues: S-adenosylmethionine:tRNA ribosyltransferase-isomerase (363 aa).

This sequence belongs to the QueA family. As to quaternary structure, monomer.

Its subcellular location is the cytoplasm. It carries out the reaction 7-aminomethyl-7-carbaguanosine(34) in tRNA + S-adenosyl-L-methionine = epoxyqueuosine(34) in tRNA + adenine + L-methionine + 2 H(+). It functions in the pathway tRNA modification; tRNA-queuosine biosynthesis. Its function is as follows. Transfers and isomerizes the ribose moiety from AdoMet to the 7-aminomethyl group of 7-deazaguanine (preQ1-tRNA) to give epoxyqueuosine (oQ-tRNA). The sequence is that of S-adenosylmethionine:tRNA ribosyltransferase-isomerase from Mannheimia succiniciproducens (strain KCTC 0769BP / MBEL55E).